A 159-amino-acid chain; its full sequence is Phosphopantetheine adenylyltransferase (159 aa).

Threonine 10 lines the substrate pocket. Residues 10–11 (TF) and histidine 18 each bind ATP. Substrate-binding residues include lysine 42, methionine 74, and arginine 88. ATP contacts are provided by residues 89–91 (GLR), glutamate 99, and 124–130 (WSFISSS).

Belongs to the bacterial CoaD family. Homohexamer. Mg(2+) serves as cofactor.

It localises to the cytoplasm. It catalyses the reaction (R)-4'-phosphopantetheine + ATP + H(+) = 3'-dephospho-CoA + diphosphate. It functions in the pathway cofactor biosynthesis; coenzyme A biosynthesis; CoA from (R)-pantothenate: step 4/5. Its function is as follows. Reversibly transfers an adenylyl group from ATP to 4'-phosphopantetheine, yielding dephospho-CoA (dPCoA) and pyrophosphate. The chain is Phosphopantetheine adenylyltransferase from Klebsiella pneumoniae (strain 342).